Reading from the N-terminus, the 802-residue chain is Putative transcriptional regulator cudA (802 aa).

Disordered regions lie at residues Met-1–Ile-148, Ile-154–Leu-173, Asn-381–Asn-446, and Gln-636–Gln-658. Residues Asn-25–Gln-63 show a composition bias toward low complexity. Residues Asp-69 to Ile-88 are compositionally biased toward polar residues. A compositionally biased stretch (low complexity) spans Asn-89–Thr-128. Residues Pro-129–Thr-142 show a composition bias toward polar residues. Residues Asn-381–Glu-445 show a composition bias toward low complexity.

In terms of tissue distribution, expressed in the prestalk cells that constitute the slug tip (pstA cells) and in prespore cells (at protein level). Not expressed in the band of prestalk cells that lies behind the slug tip (pstO cells). Highly expressed in pstO derived papilla cells during culmination.

Its subcellular location is the nucleus. The protein resides in the nucleoplasm. Essential for normal culmination. May function as a transcriptional regulator. This chain is Putative transcriptional regulator cudA (cudA), found in Dictyostelium discoideum (Social amoeba).